The sequence spans 256 residues: Gamma carbonic anhydrase-like 2, mitochondrial (256 aa).

A mitochondrion-targeting transit peptide spans 1–33; it reads MATSLARISKRSITSAVSSNLIRRYFAAEAVAV. Substrate-binding positions include 103 to 105 and 118 to 119; these read RGD and QE. A Zn(2+)-binding site is contributed by His124. The substrate site is built by Arg152, Gln164, and Tyr231.

Belongs to the gamma-class carbonic anhydrase family. In terms of assembly, component of the mitochondrial oxidoreductase respiratory chain complex I; element of the extra matrix-exposed domain, which is attached to the membrane arm of this complex. Interacts with GAMMACA2.

It is found in the mitochondrion membrane. Its function is as follows. Involved in complex I assembly in mitochondria and respiration. This chain is Gamma carbonic anhydrase-like 2, mitochondrial (GAMMACAL2), found in Arabidopsis thaliana (Mouse-ear cress).